Reading from the N-terminus, the 132-residue chain is Small ribosomal subunit protein uS8 (132 aa).

The protein belongs to the universal ribosomal protein uS8 family. As to quaternary structure, part of the 30S ribosomal subunit. Contacts proteins S5 and S12.

Functionally, one of the primary rRNA binding proteins, it binds directly to 16S rRNA central domain where it helps coordinate assembly of the platform of the 30S subunit. The protein is Small ribosomal subunit protein uS8 of Streptococcus equi subsp. equi (strain 4047).